The primary structure comprises 684 residues: U4/U6 small nuclear ribonucleoprotein Prp3 (684 aa).

Residues 1-87 form the PWI domain; that stretch reads MSLSKRELDE…HSKSNSDRNR (87 aa). The span at 73 to 107 shows a compositional bias: basic and acidic residues; sequence GRSSRHSKSNSDRNRKRELKDVFGDDSEVSKESSG. 2 disordered regions span residues 73–109 and 162–183; these read GRSS…SGVK and FISP…RLPI. Polar residues predominate over residues 170-183; it reads PKISSSSQSERLPI.

Component of the precatalytic spliceosome (spliceosome B complex). Component of the U4/U6-U5 tri-snRNP complex, a building block of the precatalytic spliceosome (spliceosome B complex). The U4/U6-U5 tri-snRNP complex is composed of the U4, U6 and U5 snRNAs and at least PRPF3, PRPF4, PRPF6, PRPF8, PRPF31, SNRNP200, TXNL4A, SNRNP40, SNRPB, SNRPD1, SNRPD2, SNRPD3, SNRPE, SNRPF, SNRPG, DDX23, CD2BP2, PPIH, SNU13, EFTUD2, SART1 and USP39, plus LSM2, LSM3, LSM4, LSM5, LSM6, LSM7 and LSM8.

Its subcellular location is the nucleus. It localises to the nucleus speckle. Plays a role in pre-mRNA splicing as component of the U4/U6-U5 tri-snRNP complex that is involved in spliceosome assembly, and as component of the precatalytic spliceosome (spliceosome B complex). The chain is U4/U6 small nuclear ribonucleoprotein Prp3 (PRPF3) from Gallus gallus (Chicken).